A 219-amino-acid polypeptide reads, in one-letter code: Lipid transferase CIDEB (219 aa).

The residue at position 18 (T18) is a Phosphothreonine. The CIDE-N domain occupies 34–110 (PQRPFRVCDH…VLEQGQSWSP (77 aa)).

This sequence belongs to the CIDE family. Interacts with DFFA. Interacts with DFFB; inhibited by DFFB. Interacts with APOB. Interacts with PREB/SEC12; facilitating loading of SCAP-SREBP into COPII vesicles. As to expression, highly enriched in the liver.

The protein resides in the lipid droplet. It localises to the endoplasmic reticulum membrane. Its subcellular location is the golgi apparatus. The protein localises to the cytoplasmic vesicle. It is found in the COPI-coated vesicle. Lipid transferase specifically expressed in hepatocytes, which promotes unilocular lipid droplet formation by mediating lipid droplet fusion. Lipid droplet fusion promotes their enlargement, restricting lipolysis and favoring lipid storage. Localizes on the lipid droplet surface, at focal contact sites between lipid droplets, and mediates atypical lipid droplet fusion by promoting directional net neutral lipid transfer from the smaller to larger lipid droplets. The transfer direction may be driven by the internal pressure difference between the contacting lipid droplet pair. Promotes lipid exchange and lipid droplet fusion in both small and large lipid droplet-containing hepatocytes. In addition to its role in lipid droplet fusion, also involved in cytoplasmic vesicle biogenesis and transport. Required for very-low-density lipoprotein (VLDL) lipidation and maturation. Probably involved in the biogenesis of VLDL transport vesicles by forming a COPII vesicle coat and facilitating the formation of endoplasmic reticulum-derived large vesicles. Also involved in sterol-regulated export of the SCAP-SREBP complex, composed of SCAP, SREBF1/SREBP1 and SREBF2/SREBP2, by promoting loading of SCAP-SREBP into COPII vesicles. May also activate apoptosis. This Mus musculus (Mouse) protein is Lipid transferase CIDEB.